We begin with the raw amino-acid sequence, 1222 residues long: ATP-dependent helicase/nuclease subunit A (1222 aa).

The UvrD-like helicase ATP-binding domain maps to 39 to 495; sequence QKRTAQQIEA…ILLKENFRSQ (457 aa). 60–67 provides a ligand contact to ATP; the sequence is ASAGSGKT. In terms of domain architecture, UvrD-like helicase C-terminal spans 524–810; that stretch reads QLIAGSHAQT…NLMTIHKSKG (287 aa).

It belongs to the helicase family. AddA subfamily. As to quaternary structure, heterodimer of AddA and AddB/RexB. The cofactor is Mg(2+).

The enzyme catalyses Couples ATP hydrolysis with the unwinding of duplex DNA by translocating in the 3'-5' direction.. It catalyses the reaction ATP + H2O = ADP + phosphate + H(+). In terms of biological role, the heterodimer acts as both an ATP-dependent DNA helicase and an ATP-dependent, dual-direction single-stranded exonuclease. Recognizes the chi site generating a DNA molecule suitable for the initiation of homologous recombination. The AddA nuclease domain is required for chi fragment generation; this subunit has the helicase and 3' -&gt; 5' nuclease activities. This is ATP-dependent helicase/nuclease subunit A from Streptococcus pyogenes serotype M12 (strain MGAS2096).